A 626-amino-acid polypeptide reads, in one-letter code: MADQRMDISSTISDFMSPGPTDLLSGSLSTSGVDCNRKRKGSATDYQESMDTDKDDPHGRLEYAEHQGRIKNAREAHSQIEKRRRDKMNSFIDELASLVPTCNAMSRKLDKLTVLRMAVQHMKTLRGATNPYTEANYKPTSLSDDELKHLILRAADGFLFVVGCDRGKILFVSESVFKILNYSQNDLIGQSLFDYLHPKDIAKVKEQLSSSDTAPRERLIDAKTGLPVKTDITPGPSRLCSGARRSFFCRMKCNRPSVKVEDKDFASTCSKKKADRKSFCTIHSTGYLKSWPPTKMGLDEDSEPDNEGCNLSCLVAIGRLHSHMVPQPVNGEIRVKSMEYVSRHAIDGKFVFVDQRATAILAYLPQELLGTSCYEYFHQDDIGHLAECHRQVLQTREKITTNCYKFKIKDGSFITLRSRWFSFMNPWTKEVEYIVSTNTVVLANVLEGGDPTFPQLTASPHSMDSMLPSGEGGPKRTHPTVPGIPGGTRAGAGKIGRMIAEEIMEIHRIRGSSPSSCGSSPLNITSTPPPDASSPGGKKILNGGTPDIPSAGLLPGQAQETPGYPYSDSSSILGENPHIGIDMIDNDQGSSSPSNDEAAMAVIMSLLEADAGLGGPVDFSDLPWPL.

Residues 1–58 are disordered; sequence MADQRMDISSTISDFMSPGPTDLLSGSLSTSGVDCNRKRKGSATDYQESMDTDKDDPH. The residue at position 17 (Ser-17) is a Phosphoserine; by GSK3-beta. A compositionally biased stretch (low complexity) spans 17 to 32; sequence SPGPTDLLSGSLSTSG. Phosphothreonine; by GSK3-beta is present on Thr-21. Positions 36 to 41 match the Nuclear localization signal motif; that stretch reads NRKRKG. Residues 72 to 125 form the bHLH domain; it reads NAREAHSQIEKRRRDKMNSFIDELASLVPTCNAMSRKLDKLTVLRMAVQHMKTL. Ser-78 is subject to Phosphoserine. Position 90 is a phosphoserine; by CK2 (Ser-90). The Nuclear export signal 1 motif lies at 142–152; sequence LSDDELKHLIL. The PAS 1 domain maps to 143 to 215; sequence SDDELKHLIL…EQLSSSDTAP (73 aa). Residue Lys-252 forms a Glycyl lysine isopeptide (Lys-Gly) (interchain with G-Cter in SUMO2 and SUMO3) linkage. Lys-259 is covalently cross-linked (Glycyl lysine isopeptide (Lys-Gly) (interchain with G-Cter in SUMO); alternate). Lys-259 is covalently cross-linked (Glycyl lysine isopeptide (Lys-Gly) (interchain with G-Cter in SUMO2); alternate). Residues 326-396 enclose the PAS 2 domain; it reads PQPVNGEIRV…ECHRQVLQTR (71 aa). Residues 361–369 carry the Nuclear export signal 2 motif; that stretch reads LAYLPQELL. In terms of domain architecture, PAC spans 401 to 444; the sequence is TNCYKFKIKDGSFITLRSRWFSFMNPWTKEVEYIVSTNTVVLAN. 2 disordered regions span residues 459-492 and 511-595; these read SPHS…RAGA and GSSP…SPSN. The interval 508 to 588 is interaction with CIART; it reads RIRGSSPSSC…IGIDMIDNDQ (81 aa). Over residues 511 to 521 the composition is skewed to low complexity; that stretch reads GSSPSSCGSSP. Lys-538 bears the N6-acetyllysine mark.

As to quaternary structure, component of the circadian clock oscillator which includes the CRY1/2 proteins, CLOCK or NPAS2, BMAL1 or BMAL2, CSNK1D and/or CSNK1E, TIMELESS and the PER1/2/3 proteins. Forms a heterodimer with CLOCK. The CLOCK-BMAL1 heterodimer is required for E-box-dependent transactivation, for CLOCK nuclear translocation and degradation, and, for phosphorylation of both CLOCK and BMAL1. Part of a nuclear complex which also includes RACK1 and PRKCA; RACK1 and PRKCA are recruited to the complex in a circadian manner. Interacts with NPAS2. Interacts with EZH2. Interacts with SUMO3. Interacts with SIRT1. Interacts with AHR. Interacts with ID1, ID2 and ID3. Interacts with DDX4. Interacts with OGT. Interacts with EED and SUZ12. Interacts with MTA1. Interacts with CIART. Interacts with HSP90. Interacts with KAT2B and EP300. Interacts with BHLHE40/DEC1 and BHLHE41/DEC2. Interacts with RELB and the interaction is enhanced in the presence of CLOCK. Interacts with PER1, PER2, CRY1 and CRY2 and this interaction requires a translocation to the nucleus. Interaction of the CLOCK-BMAL1 heterodimer with PER or CRY inhibits transcription activation. Interaction of the CLOCK-BMAL1 with CRY1 is independent of DNA but with PER2 is off DNA. The CLOCK-BMAL1 heterodimer interacts with GSK3B. Interacts with KDM5A. Interacts with KMT2A; in a circadian manner. Interacts with UBE3A. Interacts with PRKCG. Interacts with MAGEL2. Interacts with NCOA2. Interacts with THRAP3. The CLOCK-BMAL1 heterodimer interacts with PASD1. Interacts with PASD1. Interacts with USP9X. Interacts with PIWIL2 (via PIWI domain). Interacts with HDAC3. Interacts with HNF4A. Post-translationally, ubiquitinated, leading to its proteasomal degradation. Deubiquitinated by USP9X. In terms of processing, O-glycosylated; contains O-GlcNAc. O-glycosylation by OGT prevents protein degradation by inhibiting ubiquitination. It also stabilizes the CLOCK-BMAL1 heterodimer thereby increasing CLOCK-BMAL1-mediated transcription of genes in the negative loop of the circadian clock such as PER1/2/3 and CRY1/2. Acetylated on Lys-538 by CLOCK during the repression phase of the circadian cycle. Acetylation facilitates recruitment of CRY1 protein and initiates the repression phase of the circadian cycle. Acetylated at Lys-538 by KAT5 during the activation phase of the cycle, leading to recruitment of the positive transcription elongation factor b (P-TEFb) and BRD4, followed by productive elongation of circadian transcripts. Deacetylated by SIRT1, which may result in decreased protein stability. Post-translationally, phosphorylated upon dimerization with CLOCK. Phosphorylation enhances the transcriptional activity, alters the subcellular localization and decreases the stability of the CLOCK-BMAL1 heterodimer by promoting its degradation. Phosphorylation shows circadian variations in the liver with a peak between CT10 to CT14. Phosphorylation at Ser-90 by CK2 is essential for its nuclear localization, its interaction with CLOCK and controls CLOCK nuclear entry. Dephosphorylation at Ser-78 is important for dimerization with CLOCK and transcriptional activity. In terms of processing, sumoylated on Lys-259 upon dimerization with CLOCK. Predominantly conjugated to poly-SUMO2/3 rather than SUMO1 and the level of these conjugates undergo rhythmic variation, peaking at CT9-CT12. Sumoylation localizes it exclusively to the PML body and promotes its ubiquitination in the PML body, ubiquitin-dependent proteasomal degradation and the transcriptional activity of the CLOCK-BMAL1 heterodimer. Undergoes lysosome-mediated degradation in a time-dependent manner in the liver.

Its subcellular location is the nucleus. The protein localises to the cytoplasm. It localises to the PML body. In terms of biological role, transcriptional activator which forms a core component of the circadian clock. The circadian clock, an internal time-keeping system, regulates various physiological processes through the generation of approximately 24 hour circadian rhythms in gene expression, which are translated into rhythms in metabolism and behavior. It is derived from the Latin roots 'circa' (about) and 'diem' (day) and acts as an important regulator of a wide array of physiological functions including metabolism, sleep, body temperature, blood pressure, endocrine, immune, cardiovascular, and renal function. Consists of two major components: the central clock, residing in the suprachiasmatic nucleus (SCN) of the brain, and the peripheral clocks that are present in nearly every tissue and organ system. Both the central and peripheral clocks can be reset by environmental cues, also known as Zeitgebers (German for 'timegivers'). The predominant Zeitgeber for the central clock is light, which is sensed by retina and signals directly to the SCN. The central clock entrains the peripheral clocks through neuronal and hormonal signals, body temperature and feeding-related cues, aligning all clocks with the external light/dark cycle. Circadian rhythms allow an organism to achieve temporal homeostasis with its environment at the molecular level by regulating gene expression to create a peak of protein expression once every 24 hours to control when a particular physiological process is most active with respect to the solar day. Transcription and translation of core clock components (CLOCK, NPAS2, BMAL1, BMAL2, PER1, PER2, PER3, CRY1 and CRY2) plays a critical role in rhythm generation, whereas delays imposed by post-translational modifications (PTMs) are important for determining the period (tau) of the rhythms (tau refers to the period of a rhythm and is the length, in time, of one complete cycle). A diurnal rhythm is synchronized with the day/night cycle, while the ultradian and infradian rhythms have a period shorter and longer than 24 hours, respectively. Disruptions in the circadian rhythms contribute to the pathology of cardiovascular diseases, cancer, metabolic syndromes and aging. A transcription/translation feedback loop (TTFL) forms the core of the molecular circadian clock mechanism. Transcription factors, CLOCK or NPAS2 and BMAL1 or BMAL2, form the positive limb of the feedback loop, act in the form of a heterodimer and activate the transcription of core clock genes and clock-controlled genes (involved in key metabolic processes), harboring E-box elements (5'-CACGTG-3') within their promoters. The core clock genes: PER1/2/3 and CRY1/2 which are transcriptional repressors form the negative limb of the feedback loop and interact with the CLOCK|NPAS2-BMAL1|BMAL2 heterodimer inhibiting its activity and thereby negatively regulating their own expression. This heterodimer also activates nuclear receptors NR1D1/2 and RORA/B/G, which form a second feedback loop and which activate and repress BMAL1 transcription, respectively. BMAL1 positively regulates myogenesis and negatively regulates adipogenesis via the transcriptional control of the genes of the canonical Wnt signaling pathway. Plays a role in normal pancreatic beta-cell function; regulates glucose-stimulated insulin secretion via the regulation of antioxidant genes NFE2L2/NRF2 and its targets SESN2, PRDX3, CCLC and CCLM. Negatively regulates the mTORC1 signaling pathway; regulates the expression of MTOR and DEPTOR. Controls diurnal oscillations of Ly6C inflammatory monocytes; rhythmic recruitment of the PRC2 complex imparts diurnal variation to chemokine expression that is necessary to sustain Ly6C monocyte rhythms. Regulates the expression of HSD3B2, STAR, PTGS2, CYP11A1, CYP19A1 and LHCGR in the ovary and also the genes involved in hair growth. Plays an important role in adult hippocampal neurogenesis by regulating the timely entry of neural stem/progenitor cells (NSPCs) into the cell cycle and the number of cell divisions that take place prior to cell-cycle exit. Regulates the circadian expression of CIART and KLF11. The CLOCK-BMAL1 heterodimer regulates the circadian expression of SERPINE1/PAI1, VWF, B3, CCRN4L/NOC, NAMPT, DBP, MYOD1, PPARGC1A, PPARGC1B, SIRT1, GYS2, F7, NGFR, GNRHR, BHLHE40/DEC1, ATF4, MTA1, KLF10 and also genes implicated in glucose and lipid metabolism. Promotes rhythmic chromatin opening, regulating the DNA accessibility of other transcription factors. May play a role in spermatogenesis; contributes to the chromatoid body assembly and physiology. The NPAS2-BMAL1 heterodimer positively regulates the expression of MAOA, F7 and LDHA and modulates the circadian rhythm of daytime contrast sensitivity by regulating the rhythmic expression of adenylate cyclase type 1 (ADCY1) in the retina. The preferred binding motif for the CLOCK-BMAL1 heterodimer is 5'-CACGTGA-3', which contains a flanking adenine nucleotide at the 3-prime end of the canonical 6-nucleotide E-box sequence. CLOCK specifically binds to the half-site 5'-CAC-3', while BMAL1 binds to the half-site 5'-GTGA-3'. The CLOCK-BMAL1 heterodimer also recognizes the non-canonical E-box motifs 5'-AACGTGA-3' and 5'-CATGTGA-3'. Essential for the rhythmic interaction of CLOCK with ASS1 and plays a critical role in positively regulating CLOCK-mediated acetylation of ASS1. Plays a role in protecting against lethal sepsis by limiting the expression of immune checkpoint protein CD274 in macrophages in a PKM2-dependent manner. Regulates the diurnal rhythms of skeletal muscle metabolism via transcriptional activation of genes promoting triglyceride synthesis (DGAT2) and metabolic efficiency (COQ10B). The protein is Basic helix-loop-helix ARNT-like protein 1 of Rattus norvegicus (Rat).